Reading from the N-terminus, the 66-residue chain is MNNDIVAGKWKQLTGKAKAAWGELTDDELTRTEGNAERLAGLIQERYGKTKEQAQREVREFFDRNP.

The protein belongs to the UPF0337 (CsbD) family.

The chain is UPF0337 protein BP1738 from Bordetella pertussis (strain Tohama I / ATCC BAA-589 / NCTC 13251).